The following is a 471-amino-acid chain: Phosphoglycerate kinase (471 aa).

Residues 24-26 (DFN), arginine 41, 64-67 (HLSR), arginine 127, and arginine 169 each bind substrate. ATP contacts are provided by residues lysine 220, glycine 307, glutamate 338, and 368–371 (GGDS). Residues 417 to 471 (KVEAVKEKTTTTTESASKEKSSTAKTASKPATSKTTAAKKPAEKKPAAKKPAAKK) are disordered. The segment covering 439–455 (TAKTASKPATSKTTAAK) has biased composition (low complexity).

This sequence belongs to the phosphoglycerate kinase family. In terms of assembly, monomer.

It is found in the cytoplasm. It carries out the reaction (2R)-3-phosphoglycerate + ATP = (2R)-3-phospho-glyceroyl phosphate + ADP. Its pathway is carbohydrate degradation; glycolysis; pyruvate from D-glyceraldehyde 3-phosphate: step 2/5. This is Phosphoglycerate kinase from Malacoplasma penetrans (strain HF-2) (Mycoplasma penetrans).